A 346-amino-acid chain; its full sequence is Biotin synthase (346 aa).

Positions 41 to 265 (NEVQISTLLS…MMPHSYVRLS (225 aa)) constitute a Radical SAM core domain. The [4Fe-4S] cluster site is built by C56, C60, and C63. Positions 100, 131, 191, and 263 each coordinate [2Fe-2S] cluster.

The protein belongs to the radical SAM superfamily. Biotin synthase family. In terms of assembly, homodimer. It depends on [4Fe-4S] cluster as a cofactor. [2Fe-2S] cluster serves as cofactor.

It carries out the reaction (4R,5S)-dethiobiotin + (sulfur carrier)-SH + 2 reduced [2Fe-2S]-[ferredoxin] + 2 S-adenosyl-L-methionine = (sulfur carrier)-H + biotin + 2 5'-deoxyadenosine + 2 L-methionine + 2 oxidized [2Fe-2S]-[ferredoxin]. It functions in the pathway cofactor biosynthesis; biotin biosynthesis; biotin from 7,8-diaminononanoate: step 2/2. Catalyzes the conversion of dethiobiotin (DTB) to biotin by the insertion of a sulfur atom into dethiobiotin via a radical-based mechanism. The polypeptide is Biotin synthase (Pseudoalteromonas translucida (strain TAC 125)).